The primary structure comprises 646 residues: Vitamin K-dependent protein S (646 aa).

A propeptide spanning residues Gly-1–Arg-12 is cleaved from the precursor. The region spanning Ala-13–Gly-58 is the Gla domain. 4-carboxyglutamate is present on residues Glu-18, Glu-19, Glu-26, Glu-28, Glu-31, Glu-32, Glu-37, Glu-38, Glu-41, Glu-44, and Glu-48. Cys-29 and Cys-34 are joined by a disulfide. A thrombin-sensitive region spans residues Cys-59–Ala-87. Positions Ile-88–Glu-126 constitute an EGF-like 1 domain. 13 cysteine pairs are disulfide-bonded: Cys-92–Cys-105, Cys-97–Cys-114, Cys-116–Cys-125, Cys-132–Cys-146, Cys-142–Cys-155, Cys-157–Cys-170, Cys-176–Cys-188, Cys-183–Cys-197, Cys-199–Cys-212, Cys-218–Cys-227, Cys-223–Cys-236, Cys-238–Cys-253, and Cys-420–Cys-446. A (3R)-3-hydroxyaspartate modification is found at Asp-107. An EGF-like 2; calcium-binding domain is found at Asp-128 to Lys-171. Residues Asp-172–Glu-213 form the EGF-like 3; calcium-binding domain. The 41-residue stretch at Asp-214–Glu-254 folds into the EGF-like 4; calcium-binding domain. Laminin G-like domains are found at residues Leu-270–Cys-446 and Tyr-455–Cys-636. N-linked (GlcNAc...) asparagine glycosylation is found at Asn-470 and Asn-480. A disulfide bridge links Cys-609 with Cys-636.

Interacts with C4b-binding protein, a regulator of the complex system. In rabbit plasma however, protein S appears to be present only in free form. The iron and 2-oxoglutarate dependent 3-hydroxylation of aspartate and asparagine is (R) stereospecific within EGF domains. As to expression, plasma.

The protein resides in the secreted. In terms of biological role, anticoagulant plasma protein; it is a cofactor to activated protein C in the degradation of coagulation factors Va and VIIIa. It helps to prevent coagulation and stimulating fibrinolysis. This is Vitamin K-dependent protein S (PROS1) from Oryctolagus cuniculus (Rabbit).